A 138-amino-acid chain; its full sequence is Class I hydrophobin 3 (138 aa).

Residues 1 to 16 (MRFFLAITALVAAVTA) form the signal peptide. Cystine bridges form between Cys40-Cys111, Cys48-Cys105, Cys49-Cys87, and Cys112-Cys130.

This sequence belongs to the fungal hydrophobin family. Self-assembles to form functional amyloid fibrils called rodlets. Self-assembly into fibrillar rodlets occurs spontaneously at hydrophobic:hydrophilic interfaces and the rodlets further associate laterally to form amphipathic monolayers.

The protein localises to the secreted. It localises to the cell wall. Its function is as follows. Aerial growth, conidiation, and dispersal of filamentous fungi in the environment rely upon a capability of their secreting small amphipathic proteins called hydrophobins (HPBs) with low sequence identity. Class I can self-assemble into an outermost layer of rodlet bundles on aerial cell surfaces, conferring cellular hydrophobicity that supports fungal growth, development and dispersal; whereas Class II form highly ordered films at water-air interfaces through intermolecular interactions but contribute nothing to the rodlet structure. HYD3 is a class I hydrophobin that contributes to the formation of aerial hyphae and fruiting bodies. The protein is Class I hydrophobin 3 of Cordyceps militaris (Caterpillar fungus).